Consider the following 201-residue polypeptide: FMN-dependent NADH:quinone oxidoreductase (201 aa).

Residues Ser10, 16-18, 95-98, and 139-142 contribute to the FMN site; these read SQS, MYNF, and TTGG.

The protein belongs to the azoreductase type 1 family. Homodimer. It depends on FMN as a cofactor.

The catalysed reaction is 2 a quinone + NADH + H(+) = 2 a 1,4-benzosemiquinone + NAD(+). The enzyme catalyses N,N-dimethyl-1,4-phenylenediamine + anthranilate + 2 NAD(+) = 2-(4-dimethylaminophenyl)diazenylbenzoate + 2 NADH + 2 H(+). Its function is as follows. Quinone reductase that provides resistance to thiol-specific stress caused by electrophilic quinones. Also exhibits azoreductase activity. Catalyzes the reductive cleavage of the azo bond in aromatic azo compounds to the corresponding amines. The polypeptide is FMN-dependent NADH:quinone oxidoreductase (Tolumonas auensis (strain DSM 9187 / NBRC 110442 / TA 4)).